The following is a 458-amino-acid chain: Bifunctional protein GlmU (458 aa).

The interval 1–229 is pyrophosphorylase; the sequence is MKEKALSIVI…FMEVEGVNNR (229 aa). Residues 11 to 14, Lys-25, Gln-76, 81 to 82, 103 to 105, Gly-140, Glu-154, Asn-169, and Asn-227 contribute to the UDP-N-acetyl-alpha-D-glucosamine site; these read LAAG, GT, and YGD. Asp-105 is a binding site for Mg(2+). Residue Asn-227 coordinates Mg(2+). A linker region spans residues 230 to 250; that stretch reads QQLARLERYYQRKQADNLLLA. The segment at 251–458 is N-acetyltransferase; it reads GVALADPERF…WQRPTKQTKK (208 aa). UDP-N-acetyl-alpha-D-glucosamine is bound by residues Arg-333 and Lys-351. The active-site Proton acceptor is His-363. Residues Tyr-366 and Asn-377 each contribute to the UDP-N-acetyl-alpha-D-glucosamine site. Acetyl-CoA-binding positions include Ala-380, 386-387, Ser-405, Ala-423, and Arg-440; that span reads NY.

It in the N-terminal section; belongs to the N-acetylglucosamine-1-phosphate uridyltransferase family. In the C-terminal section; belongs to the transferase hexapeptide repeat family. Homotrimer. The cofactor is Mg(2+).

It localises to the cytoplasm. The catalysed reaction is alpha-D-glucosamine 1-phosphate + acetyl-CoA = N-acetyl-alpha-D-glucosamine 1-phosphate + CoA + H(+). It carries out the reaction N-acetyl-alpha-D-glucosamine 1-phosphate + UTP + H(+) = UDP-N-acetyl-alpha-D-glucosamine + diphosphate. The protein operates within nucleotide-sugar biosynthesis; UDP-N-acetyl-alpha-D-glucosamine biosynthesis; N-acetyl-alpha-D-glucosamine 1-phosphate from alpha-D-glucosamine 6-phosphate (route II): step 2/2. It participates in nucleotide-sugar biosynthesis; UDP-N-acetyl-alpha-D-glucosamine biosynthesis; UDP-N-acetyl-alpha-D-glucosamine from N-acetyl-alpha-D-glucosamine 1-phosphate: step 1/1. Its pathway is bacterial outer membrane biogenesis; LPS lipid A biosynthesis. In terms of biological role, catalyzes the last two sequential reactions in the de novo biosynthetic pathway for UDP-N-acetylglucosamine (UDP-GlcNAc). The C-terminal domain catalyzes the transfer of acetyl group from acetyl coenzyme A to glucosamine-1-phosphate (GlcN-1-P) to produce N-acetylglucosamine-1-phosphate (GlcNAc-1-P), which is converted into UDP-GlcNAc by the transfer of uridine 5-monophosphate (from uridine 5-triphosphate), a reaction catalyzed by the N-terminal domain. In Pasteurella multocida (strain Pm70), this protein is Bifunctional protein GlmU.